The following is a 91-amino-acid chain: Small ribosomal subunit protein uS19 (91 aa).

This sequence belongs to the universal ribosomal protein uS19 family.

Functionally, protein S19 forms a complex with S13 that binds strongly to the 16S ribosomal RNA. The polypeptide is Small ribosomal subunit protein uS19 (Erythrobacter litoralis (strain HTCC2594)).